Reading from the N-terminus, the 531-residue chain is NADH-quinone oxidoreductase subunit N (531 aa).

A run of 14 helical transmembrane segments spans residues 8 to 28 (VEYF…AGVL), 41 to 61 (AQVT…IVVA), 81 to 101 (ATLF…VFMA), 146 to 166 (GATQ…MMVF), 172 to 192 (LLTM…MCGL), 208 to 228 (FLLG…LYGA), 250 to 270 (ALAG…AVPF), 282 to 302 (PTPI…GALL), 318 to 338 (PVLW…AVNQ), 350 to 370 (VAHV…GLSA), 372 to 392 (LFYL…VGLV), 418 to 438 (IVGV…LTSG), 453 to 473 (GAVP…YFYV), and 500 to 520 (AAIA…QPVL).

Belongs to the complex I subunit 2 family. As to quaternary structure, NDH-1 is composed of 14 different subunits. Subunits NuoA, H, J, K, L, M, N constitute the membrane sector of the complex.

Its subcellular location is the cell membrane. It carries out the reaction a quinone + NADH + 5 H(+)(in) = a quinol + NAD(+) + 4 H(+)(out). In terms of biological role, NDH-1 shuttles electrons from NADH, via FMN and iron-sulfur (Fe-S) centers, to quinones in the respiratory chain. The immediate electron acceptor for the enzyme in this species is believed to be a menaquinone. Couples the redox reaction to proton translocation (for every two electrons transferred, four hydrogen ions are translocated across the cytoplasmic membrane), and thus conserves the redox energy in a proton gradient. The polypeptide is NADH-quinone oxidoreductase subunit N (Mycobacterium bovis (strain ATCC BAA-935 / AF2122/97)).